The chain runs to 268 residues: Undecaprenyl-diphosphatase (268 aa).

Helical transmembrane passes span 11–33 (FLGL…LLLI), 46–66 (FEVL…SAKL), 84–104 (LGVL…HGFI), 107–127 (VLFE…FILL), 144–164 (YPLP…IPGV), 185–205 (AEFS…YDLF), 213–233 (FNDG…GVFV), and 246–266 (FALF…ALII).

Belongs to the UppP family.

It is found in the cell inner membrane. The enzyme catalyses di-trans,octa-cis-undecaprenyl diphosphate + H2O = di-trans,octa-cis-undecaprenyl phosphate + phosphate + H(+). Its function is as follows. Catalyzes the dephosphorylation of undecaprenyl diphosphate (UPP). Confers resistance to bacitracin. This is Undecaprenyl-diphosphatase from Brucella suis (strain ATCC 23445 / NCTC 10510).